We begin with the raw amino-acid sequence, 995 residues long: Pheromone-regulated membrane protein 10 (995 aa).

4 disordered regions span residues 1 to 217, 253 to 299, 326 to 407, and 425 to 508; these read MSSH…GEKH, GRVL…AVEM, DQSF…YIAP, and NPQD…NPDQ. Residues 74 to 88 are compositionally biased toward low complexity; that stretch reads SNSSTTNNSTESSGS. Basic and acidic residues predominate over residues 110–121; the sequence is VKGESGDAHEGS. The span at 157–166 shows a compositional bias: low complexity; the sequence is SRGSVGSSSS. A compositionally biased stretch (basic and acidic residues) spans 170 to 187; it reads KGSDDVNEKETNLDHDYD. The span at 259–269 shows a compositional bias: gly residues; sequence GSGGGGGGGLI. Positions 283–296 are enriched in acidic residues; it reads EEKEVGGGGEDDGA. Over residues 326–347 the composition is skewed to polar residues; the sequence is DQSFTYDEPNQSAGSSRNSTAP. 2 stretches are compositionally biased toward basic and acidic residues: residues 359–371 and 385–396; these read DDHK…DQGK and GNDDPEDQHLLL. The segment covering 495-506 has biased composition (acidic residues); it reads EADDEDEDEENP. A run of 10 helical transmembrane segments spans residues 678–698, 700–720, 726–746, 752–772, 794–814, 833–850, 858–878, 881–901, 906–926, and 965–985; these read VFLY…GGWL, IPVT…VSSM, SVFE…IGSI, FCFS…YIIL, IIYS…FGWV, KYRI…GLIN, PVMM…GKHF, VPEF…NVYS, GMAV…GIAS, and VEVS…VYPF.

This sequence belongs to the ThrE exporter (TC 2.A.79) family.

It localises to the membrane. In Pichia sorbitophila (strain ATCC MYA-4447 / BCRC 22081 / CBS 7064 / NBRC 10061 / NRRL Y-12695) (Hybrid yeast), this protein is Pheromone-regulated membrane protein 10.